Consider the following 332-residue polypeptide: Fructose-1,6-bisphosphatase class 1 (332 aa).

4 residues coordinate Mg(2+): E89, D110, L112, and D113. Residues 113–116 (DGSS), N206, Y239, 257–259 (YLY), and K269 each bind substrate. E275 contributes to the Mg(2+) binding site.

This sequence belongs to the FBPase class 1 family. Homotetramer. Mg(2+) serves as cofactor.

It localises to the cytoplasm. The catalysed reaction is beta-D-fructose 1,6-bisphosphate + H2O = beta-D-fructose 6-phosphate + phosphate. Its pathway is carbohydrate biosynthesis; gluconeogenesis. The sequence is that of Fructose-1,6-bisphosphatase class 1 from Cronobacter sakazakii (strain ATCC BAA-894) (Enterobacter sakazakii).